Reading from the N-terminus, the 433-residue chain is 23S rRNA (uracil(1939)-C(5))-methyltransferase RlmD (433 aa).

Residues 10 to 68 (RTTTRQIITVSVNDLDSFGQGVARHNGKTLFIPGLLPQENAEVTVTEDKKQYARAKVVR) form the TRAM domain. Residues Cys-81, Cys-87, Cys-90, and Cys-162 each contribute to the [4Fe-4S] cluster site. The S-adenosyl-L-methionine site is built by Gln-265, Phe-294, Asn-299, Glu-315, Asn-342, and Asp-363. Cys-389 acts as the Nucleophile in catalysis.

It belongs to the class I-like SAM-binding methyltransferase superfamily. RNA M5U methyltransferase family. RlmD subfamily.

It catalyses the reaction uridine(1939) in 23S rRNA + S-adenosyl-L-methionine = 5-methyluridine(1939) in 23S rRNA + S-adenosyl-L-homocysteine + H(+). In terms of biological role, catalyzes the formation of 5-methyl-uridine at position 1939 (m5U1939) in 23S rRNA. This chain is 23S rRNA (uracil(1939)-C(5))-methyltransferase RlmD, found in Escherichia coli O6:K15:H31 (strain 536 / UPEC).